The sequence spans 67 residues: Alpha-toxin Bu1 (67 aa).

Positions 3-65 (RDAYIADDKN…VPIRIPGRCR (63 aa)) constitute an LCN-type CS-alpha/beta domain. 4 cysteine pairs are disulfide-bonded: Cys-13/Cys-64, Cys-17/Cys-37, Cys-23/Cys-47, and Cys-27/Cys-49. Arg-65 carries the post-translational modification Arginine amide.

It belongs to the long (4 C-C) scorpion toxin superfamily. Sodium channel inhibitor family. Alpha subfamily. Expressed by the venom gland.

The protein localises to the secreted. Its function is as follows. Alpha toxins bind voltage-independently at site-3 of sodium channels (Nav) and inhibit the inactivation of the activated channels, thereby blocking neuronal transmission. Since the experiments have been done on F11 cells (immortalized cell line derived from rat DRG neurons mainly expressing Nav1.3/SCN3A, but also Nav1.7/SCN9A and Nav1.2/SCN2A), it is supposed to act on these channels. The slow of inactivation process is partially reversible. Is lethal to mice. This Buthacus macrocentrus (Turkish scorpion) protein is Alpha-toxin Bu1.